An 81-amino-acid polypeptide reads, in one-letter code: Beta-catenin-interacting protein 1 (81 aa).

Ser-59 is subject to Phosphoserine.

Belongs to the CTNNBIP1 family. As to quaternary structure, binds CTNNB1. As to expression, highly expressed in heart, brain, liver and skeletal muscle. Detected at low levels in kidney, testis and lung.

Its subcellular location is the cytoplasm. The protein resides in the nucleus. Functionally, prevents the interaction between CTNNB1 and TCF family members, and acts as a negative regulator of the Wnt signaling pathway. The chain is Beta-catenin-interacting protein 1 (Ctnnbip1) from Mus musculus (Mouse).